A 155-amino-acid polypeptide reads, in one-letter code: 6,7-dimethyl-8-ribityllumazine synthase (155 aa).

Residues Phe24, 58–60, and 82–84 contribute to the 5-amino-6-(D-ribitylamino)uracil site; these read AFE and VII. Position 87–88 (87–88) interacts with (2S)-2-hydroxy-3-oxobutyl phosphate; the sequence is ST. The Proton donor role is filled by His90. Residue Phe115 participates in 5-amino-6-(D-ribitylamino)uracil binding. Arg129 serves as a coordination point for (2S)-2-hydroxy-3-oxobutyl phosphate.

The protein belongs to the DMRL synthase family.

It catalyses the reaction (2S)-2-hydroxy-3-oxobutyl phosphate + 5-amino-6-(D-ribitylamino)uracil = 6,7-dimethyl-8-(1-D-ribityl)lumazine + phosphate + 2 H2O + H(+). It participates in cofactor biosynthesis; riboflavin biosynthesis; riboflavin from 2-hydroxy-3-oxobutyl phosphate and 5-amino-6-(D-ribitylamino)uracil: step 1/2. In terms of biological role, catalyzes the formation of 6,7-dimethyl-8-ribityllumazine by condensation of 5-amino-6-(D-ribitylamino)uracil with 3,4-dihydroxy-2-butanone 4-phosphate. This is the penultimate step in the biosynthesis of riboflavin. The chain is 6,7-dimethyl-8-ribityllumazine synthase from Chlorobaculum tepidum (strain ATCC 49652 / DSM 12025 / NBRC 103806 / TLS) (Chlorobium tepidum).